Here is a 206-residue protein sequence, read N- to C-terminus: dTTP/UTP pyrophosphatase (206 aa).

Catalysis depends on Asp79, which acts as the Proton acceptor.

The protein belongs to the Maf family. YhdE subfamily. A divalent metal cation serves as cofactor.

The protein localises to the cytoplasm. The catalysed reaction is dTTP + H2O = dTMP + diphosphate + H(+). It carries out the reaction UTP + H2O = UMP + diphosphate + H(+). Its function is as follows. Nucleoside triphosphate pyrophosphatase that hydrolyzes dTTP and UTP. May have a dual role in cell division arrest and in preventing the incorporation of modified nucleotides into cellular nucleic acids. In Rhizobium meliloti (strain 1021) (Ensifer meliloti), this protein is dTTP/UTP pyrophosphatase.